Consider the following 313-residue polypeptide: Olfactory receptor 1M1 (313 aa).

The Extracellular segment spans residues 1–25 (MEPQNHTSASEFILLGLSEKPDHDP). A glycan (N-linked (GlcNAc...) asparagine) is linked at asparagine 5. A helical membrane pass occupies residues 26–46 (VLFSLFLCMYMITVVGNLLII). Residues 47–54 (LAISFDSH) lie on the Cytoplasmic side of the membrane. A helical transmembrane segment spans residues 55-75 (LHTPMYFFLANLSLVDFCLAT). Residues 76–97 (NTVPKMLVNIQTRNKSISYPCC) are Extracellular-facing. Asparagine 89 carries N-linked (GlcNAc...) asparagine glycosylation. Cysteines 97 and 179 form a disulfide. Residues 98-118 (LTQMYFFHFFGIMDSVLIAVM) traverse the membrane as a helical segment. Over 119–142 (AYDRFVAICHPLHYSTIMSPRLCG) the chain is Cytoplasmic. Residues 143 to 163 (LLVGVPWVYSCFISLTHILLM) form a helical membrane-spanning segment. Residues 164-196 (ARLVFCGKNELPHYFCDLTPLLRLSCTDTTVNK) lie on the Extracellular side of the membrane. Residues 197 to 217 (IFVLIVAGMVIATPFVCILAS) form a helical membrane-spanning segment. At 218–244 (YARIIVAIMKVPSAGGRKKAFSTCSSH) the chain is on the cytoplasmic side. A helical membrane pass occupies residues 245-265 (LSVVALFYGTTIGVYLCPSSV). Topologically, residues 266–274 (RTAVKEKAS) are extracellular. A helical transmembrane segment spans residues 275-292 (AVMYTAVTPMLNPFIYSL). Residues 293–313 (RNRDLKGALKKIINRKISTSS) are Cytoplasmic-facing.

This sequence belongs to the G-protein coupled receptor 1 family. In terms of tissue distribution, expressed in testis.

Its subcellular location is the cell membrane. Functionally, odorant receptor. This Mus musculus (Mouse) protein is Olfactory receptor 1M1.